The chain runs to 249 residues: E3 ubiquitin-protein ligase RMA1 (249 aa).

An RING-type zinc finger spans residues 48 to 97; it reads CNICLDSVQEPVVTLCGHLFCWPCIHKWLDVQSFSTSDEYQRHRQCPVCK. Residues 231–248 traverse the membrane as a helical; Anchor for type IV membrane protein segment; the sequence is LGRIFFFFMCCVVLCLLL.

In terms of tissue distribution, ubiquitous. Highly expressed in roots.

Its subcellular location is the endoplasmic reticulum membrane. It carries out the reaction S-ubiquitinyl-[E2 ubiquitin-conjugating enzyme]-L-cysteine + [acceptor protein]-L-lysine = [E2 ubiquitin-conjugating enzyme]-L-cysteine + N(6)-ubiquitinyl-[acceptor protein]-L-lysine.. It functions in the pathway protein modification; protein ubiquitination. Its function is as follows. E3 ubiquitin-protein ligase that promotes the ubiquitination and proteasomal degradation of aquaporin PIP2-1. Forms a ubiquitin ligase complex in cooperation with the E2 enzymes UCB8/UCB10. The protein is E3 ubiquitin-protein ligase RMA1 (RMA1) of Arabidopsis thaliana (Mouse-ear cress).